Reading from the N-terminus, the 816-residue chain is Cation/H(+) antiporter 8 (816 aa).

The next 12 helical transmembrane spans lie at 64–84 (PKLEIVILLVFFLWQGFNILF), 97–117 (MMLAGLLLNVLVTLSGENSII), 127–147 (IDVAGCLGSFGFLIFWFLKGV), 163–183 (VTGVAAVTFPIVVGFLLFNLK), 197–214 (VMLLMESITSFSGIARLL), 227–247 (VALSSALVSDIVGLLLLIANV), 255–275 (ADGLAILTEITLFLVIAFAVV), 297–317 (IHGVLVLVCLSCMYWEDLSQF), 343–363 (LESFNFGIILPLFLTAVMLRT), 382–402 (FAVASLVLLIFLLKLSVSVIV), 413–433 (SIILALIMSHKGIIELSFYLF), and 447–467 (ILVLSIVLNSLLIPMAIGFLY).

It belongs to the monovalent cation:proton antiporter 2 (CPA2) transporter (TC 2.A.37) family. CHX (TC 2.A.37.4) subfamily. As to expression, specifically expressed in pollen.

It is found in the membrane. In terms of biological role, may operate as a cation/H(+) antiporter. The chain is Cation/H(+) antiporter 8 (CHX8) from Arabidopsis thaliana (Mouse-ear cress).